Reading from the N-terminus, the 1242-residue chain is MFFNPYLSGGVTGGAVAGGRRQRSQPGSAQGSGKRPPQKQFLQIVPRGVMFDGQTGLIKHKTGRLPLMFYREIKHLLSHDMVWPCPWRETLVGRVVGPIRFHTYDQTDAVLFFDSPENVSPRYRQHLVPSGNVLRFFGATEHGYSICVNVFGQRSYFYCEYSDTDRLREVIASVGELVPEPRTPYAVSVTPATKTSIYGYGTRPVPDLQCVSISNWTMARKIGEYLLEQGFPVYEVRVDPLTRLVIDRRITTFGWCSVNRYDWRQQGRASTCDIEVDCDVSDLVAVPDDSSWPRYRCLSFDIECMSGEGGFPCAEKSDDIVIQISCVCYETGGNTAVDQGIPNGNDGRGCTSEGVIFGHSGLHLFTIGTCGQVGPDVDVYEFPSEYELLLGFMLFFQRYAPAFVTGYNINSFDLKYILTRLEYLYKVDSQRFCKLPTAQGGRFFLHSPAVGFKRQYAAAFPSASHNNPASTAATKVYIAGSVVIDMYPVCMAKTNSPNYKLNTMAELYLRQRKDDLSYKDIPRCFVANAEGRAQVGRYCLQDAVLVRDLFNTINFHYEAGAIARLAKIPLRRVIFDGQQIRIYTSLLDECACRDFILPNHYSKGTTVPETNSVAVSPNAAIISTAAVPGDAGSVAAMFQMSPPLQSAPSSQDGVSPGSGSNSSSSVGVFSVGSGSSGGVGVSNDNHGAGGTAAVSYQGATVFEPEVGYYNDPVAVFDFASLYPSIIMAHNLCYSTLLVPGGEYPVDPADVYSVTLENGVTHRFVRASVRVSVLSELLNKWVSQRRAVRECMRECQDPVRRMLLDKEQMALKVTCNAFYGFTGVVNGMMPCLPIAASITRIGRDMLERTARFIKDNFSEPCFLHNFFNQEDYVVGTREGDSEESSTLPEGLETSSGGLNERRVEARVIYGDTDSVFVRFRGLTPQALVARGPSLAHYVTACLFVEPVKLEFEKVFVSLMMICKKRYIGKVEGASGLSMKGVDLVRKTACEFVKGVTRDVLSLLFEDREVSEAAVRLSRLSLDEVKKYGVPRGFWRILRRLVQARDDLYLHRVRVEDLVLSSVLSKDISLYRQSNLPHIAVIKRLAARSEELPSVGDRVFYVLTAPGVRAAPQGSSDNGDSVTTGVVSRSDAIDGTDDDADGGGVEESNRRGGEPAKKRARKPPSAVCNYEVAEDPSYVREHGVPIHADKYFEQVLKAVTNVLSPVFPGGETARKDKFLHMVLPRRLHLEPAFLPYSVKAHECC.

3 disordered regions span residues 14–38 (GAVA…RPPQ), 644–665 (LQSA…SSSS), and 1109–1162 (APQG…RKPP). The segment covering 653 to 665 (GVSPGSGSNSSSS) has biased composition (low complexity). Over residues 1111-1125 (QGSSDNGDSVTTGVV) the composition is skewed to polar residues. The span at 1145-1155 (ESNRRGGEPAK) shows a compositional bias: basic and acidic residues.

Belongs to the DNA polymerase type-B family. As to quaternary structure, forms a complex with the ssDNA-binding protein UL57, the DNA polymerase processivity factor UL44, and the alkaline exonuclease UL98. Interacts with the putative helicase-primase complex composed of UL70, UL102 and UL105 proteins; these interactions may coordinate leading and lagging strand DNA synthesis at the replication fork.

Its subcellular location is the host nucleus. It carries out the reaction DNA(n) + a 2'-deoxyribonucleoside 5'-triphosphate = DNA(n+1) + diphosphate. In terms of biological role, replicates viral genomic DNA in the late phase of lytic infection, producing long concatemeric DNA. The replication complex is composed of six viral proteins: the DNA polymerase, processivity factor, primase, primase-associated factor, helicase, and ssDNA-binding protein. The polypeptide is DNA polymerase catalytic subunit (UL54) (Homo sapiens (Human)).